A 138-amino-acid chain; its full sequence is Acidic phospholipase A2 Cvv-E6e (138 aa).

The first 16 residues, 1-16 (MRTLWILAVLLLGVEG), serve as a signal peptide directing secretion. Intrachain disulfides connect Cys-42/Cys-131, Cys-44/Cys-60, Cys-59/Cys-111, Cys-65/Cys-138, Cys-66/Cys-104, Cys-73/Cys-97, and Cys-91/Cys-102. Positions 43, 45, and 47 each coordinate Ca(2+). The active site involves His-63. Residue Asp-64 coordinates Ca(2+). Asp-105 is an active-site residue.

Requires Ca(2+) as cofactor. Expressed by the venom gland.

It localises to the secreted. The enzyme catalyses a 1,2-diacyl-sn-glycero-3-phosphocholine + H2O = a 1-acyl-sn-glycero-3-phosphocholine + a fatty acid + H(+). Snake venom phospholipase A2 (PLA2) that significantly inhibits ADP-induced platelet aggregation in platelet-rich plasma of human, rabbit and guinea pig. PLA2 catalyzes the calcium-dependent hydrolysis of the 2-acyl groups in 3-sn-phosphoglycerides. This chain is Acidic phospholipase A2 Cvv-E6e, found in Crotalus viridis viridis (Prairie rattlesnake).